We begin with the raw amino-acid sequence, 313 residues long: Ribosomal RNA small subunit methyltransferase H (313 aa).

S-adenosyl-L-methionine-binding positions include 35-37 (GGH), Asp-55, Phe-79, Asp-101, and Gln-108.

The protein belongs to the methyltransferase superfamily. RsmH family.

It is found in the cytoplasm. The catalysed reaction is cytidine(1402) in 16S rRNA + S-adenosyl-L-methionine = N(4)-methylcytidine(1402) in 16S rRNA + S-adenosyl-L-homocysteine + H(+). Functionally, specifically methylates the N4 position of cytidine in position 1402 (C1402) of 16S rRNA. The sequence is that of Ribosomal RNA small subunit methyltransferase H from Escherichia coli O127:H6 (strain E2348/69 / EPEC).